The sequence spans 842 residues: MEADPKVPFTDEMNIQDEHNWESGSWSSSRRSNDSNVTLLSRRSSVEQHEDERQKDSDTLFEHGDAALDAQGIADPRLKDYPIPLVAQTVHLRNDDSEPILTFRVWLLSTFWVLAGCSISTVYYFKPFSVRLSGYVVQLCTWKMGQLLASALPTRPFTVLGRRWTLNPGRWSAKEHALVVIAYWGSSYTAYGLGPLSAMELFYGKRLSSPWAITFLVTTQLTGYGLVGLYRHILVRPPSMYYPGILPTVSLFNAMHGDPRQTASSLRVFMAIASAAFVYQWLPSFVFPLLSSLPLLCWVGRGSWEAFVLGSGSLGFGLMDFSLDWNYVAFLSPLFTPLWANANRFVGAALAVWITYPVAYFSDALGSLRFPPMSSETFDTSGGLYNVSRIMTPSLELNQTALELYSTPRWSFSYAMHFFWGFASASAIVTYAVLFHGRTILKALANVWSLDGNTADDIDSEKDPYVKLTSHHARVPQAWYALLLAVCLCLGTIQLYAGDMQLPWWGLQLVVAISALFTLPCGMLFATANVQIGMDYVSEVLAGALFPGRPVAVLTATVYGRQVLEQCLNLASDLKLGFYMKIPEWELLVAQVYGTLLGPFVNWAVMRLIIDTQGAAALLGREGGDGKGQGLGLGQGGGGGGGGGGGGGQQQRAAGAHTTEWNALKTKNFFSSSVIWGVMGPARVFGGGDGSPSSSSPYRWLLPSGFAVGAAAVLLLWLIHKARPAWRVQQWPLHPAIIFHGASLFPVFPTTNLTSSMAAAVASMGVMRRWHPRWFARWNYLLGAGLDCGAQLVQMVLGLAFLVFNRHGQQMVRMPHWWGNDAVAVDQCFPPPDLPSVIMSPM.

Residues Met-1–Asp-58 are disordered. Low complexity predominate over residues Ser-23–Asn-36. Residues Asn-33 and Asn-36 are each glycosylated (N-linked (GlcNAc...) asparagine). A compositionally biased stretch (basic and acidic residues) spans Ser-44–Asp-58. The next 6 helical transmembrane spans lie at Val-105–Phe-125, Ala-177–Ser-197, Pro-210–Tyr-230, Val-268–Pro-288, Gly-315–Phe-335, and Phe-345–Leu-365. Asn-386 and Asn-398 each carry an N-linked (GlcNAc...) asparagine glycan. The next 4 helical transmembrane spans lie at Ala-415 to Phe-435, Ala-478 to Gly-498, Trp-505 to Phe-525, and Trp-585 to Val-605. Over residues Gln-629 to Gln-649 the composition is skewed to gly residues. The segment at Gln-629–His-657 is disordered. 3 consecutive transmembrane segments (helical) span residues Asn-668–Gly-688, Trp-700–His-720, and Trp-731–Thr-751. N-linked (GlcNAc...) asparagine glycosylation occurs at Asn-752. A helical membrane pass occupies residues Ala-784–Phe-804.

Belongs to the oligopeptide OPT transporter family.

Its subcellular location is the membrane. Oligopeptide transporter; part of the gene cluster that mediates the biosynthesis of the phomopsins, a group of hexapeptide mycotoxins which infects lupins and causes lupinosis disease in livestock. This chain is Oligopeptide transporter phomP2', found in Diaporthe leptostromiformis (Lupinosis disease fungus).